Here is a 226-residue protein sequence, read N- to C-terminus: Putative DNA repair protein recA homolog 4 (226 aa).

Residue 41-48 (GPEASGKT) coordinates ATP.

The protein belongs to the RecA family.

It localises to the cytoplasm. In terms of biological role, involved in recombination ability and DNA strand transfer activity. The protein is Putative DNA repair protein recA homolog 4 of Arabidopsis thaliana (Mouse-ear cress).